We begin with the raw amino-acid sequence, 642 residues long: Probable glutamate--tRNA ligase, cytoplasmic (642 aa).

Residue 152–154 coordinates L-glutamate; it reads RFP. A 'HIGH' region motif is present at residues 157 to 166; that stretch reads PNGRLHIGHA. His162 provides a ligand contact to ATP. L-glutamate is bound by residues Asp188, 326–330, and Arg344; that span reads YDFAC. ATP-binding positions include Glu347 and 382-386; that span reads VLSKR. Positions 382 to 386 match the 'KMSKS' region motif; that stretch reads VLSKR.

The protein belongs to the class-I aminoacyl-tRNA synthetase family. Glutamate--tRNA ligase type 2 subfamily.

Its subcellular location is the cytoplasm. The enzyme catalyses tRNA(Glu) + L-glutamate + ATP = L-glutamyl-tRNA(Glu) + AMP + diphosphate. The sequence is that of Probable glutamate--tRNA ligase, cytoplasmic from Encephalitozoon cuniculi (strain GB-M1) (Microsporidian parasite).